The primary structure comprises 514 residues: tRNA-2-methylthio-N(6)-dimethylallyladenosine synthase (514 aa).

Residues 68–186 (RTFLIKTYGC…LPEILEEAYL (119 aa)) enclose the MTTase N-terminal domain. The [4Fe-4S] cluster site is built by cysteine 77, cysteine 113, cysteine 147, cysteine 223, cysteine 227, and cysteine 230. Positions 209-439 (REGSTKAWVN…NKKVGHYSEK (231 aa)) constitute a Radical SAM core domain. One can recognise a TRAM domain in the interval 442–505 (NQYEGKTVTV…QYSLNGTFKE (64 aa)).

The protein belongs to the methylthiotransferase family. MiaB subfamily. In terms of assembly, monomer. It depends on [4Fe-4S] cluster as a cofactor.

It is found in the cytoplasm. It carries out the reaction N(6)-dimethylallyladenosine(37) in tRNA + (sulfur carrier)-SH + AH2 + 2 S-adenosyl-L-methionine = 2-methylsulfanyl-N(6)-dimethylallyladenosine(37) in tRNA + (sulfur carrier)-H + 5'-deoxyadenosine + L-methionine + A + S-adenosyl-L-homocysteine + 2 H(+). Functionally, catalyzes the methylthiolation of N6-(dimethylallyl)adenosine (i(6)A), leading to the formation of 2-methylthio-N6-(dimethylallyl)adenosine (ms(2)i(6)A) at position 37 in tRNAs that read codons beginning with uridine. The polypeptide is tRNA-2-methylthio-N(6)-dimethylallyladenosine synthase (Staphylococcus haemolyticus (strain JCSC1435)).